We begin with the raw amino-acid sequence, 326 residues long: Zinc-dependent endopolyphosphatase (326 aa).

Residues 1–9 (MEDKRKRRA) are Cytoplasmic-facing. The helical transmembrane segment at 10–30 (ATLSTALILFVACCVYTLYIF) threads the bilayer. The Vacuolar portion of the chain corresponds to 31–326 (KFDNPRLSPP…DYELIQVQCS (296 aa)). N-linked (GlcNAc...) asparagine glycans are attached at residues N90 and N241.

The protein belongs to the metallophosphoesterase superfamily. As to quaternary structure, interacts with PPN1. The cofactor is Zn(2+). Co(2+) is required as a cofactor. Mg(2+) serves as cofactor.

It is found in the vacuole membrane. The enzyme catalyses [phosphate](n+1) + n H2O = (n+1) phosphate + n H(+). With respect to regulation, not sensitive to heparin inhibition. In terms of biological role, catalyzes the hydrolysis of inorganic polyphosphate (polyP) chains of many hundreds of phosphate residues into shorter lengths. Exclusively shows endopolyphosphatase activity, cleaving inside the polyP chain. Together with PPN1, responsible for a substantial fraction of polyphosphatase activity that is necessary to mobilize polyP stores in response to phosphate scarcity. The sequence is that of Zinc-dependent endopolyphosphatase from Saccharomyces cerevisiae (strain ATCC 204508 / S288c) (Baker's yeast).